Consider the following 578-residue polypeptide: Arginine--tRNA ligase (578 aa).

Positions 127–137 (PNLAKEMHVGH) match the 'HIGH' region motif.

Belongs to the class-I aminoacyl-tRNA synthetase family. As to quaternary structure, monomer.

Its subcellular location is the cytoplasm. It carries out the reaction tRNA(Arg) + L-arginine + ATP = L-arginyl-tRNA(Arg) + AMP + diphosphate. The chain is Arginine--tRNA ligase from Pseudomonas putida (strain GB-1).